Consider the following 107-residue polypeptide: Pyrimidine/purine nucleoside phosphorylase (107 aa).

The protein belongs to the nucleoside phosphorylase PpnP family.

It carries out the reaction a purine D-ribonucleoside + phosphate = a purine nucleobase + alpha-D-ribose 1-phosphate. The catalysed reaction is adenosine + phosphate = alpha-D-ribose 1-phosphate + adenine. It catalyses the reaction cytidine + phosphate = cytosine + alpha-D-ribose 1-phosphate. The enzyme catalyses guanosine + phosphate = alpha-D-ribose 1-phosphate + guanine. It carries out the reaction inosine + phosphate = alpha-D-ribose 1-phosphate + hypoxanthine. The catalysed reaction is thymidine + phosphate = 2-deoxy-alpha-D-ribose 1-phosphate + thymine. It catalyses the reaction uridine + phosphate = alpha-D-ribose 1-phosphate + uracil. The enzyme catalyses xanthosine + phosphate = alpha-D-ribose 1-phosphate + xanthine. Functionally, catalyzes the phosphorolysis of diverse nucleosides, yielding D-ribose 1-phosphate and the respective free bases. Can use uridine, adenosine, guanosine, cytidine, thymidine, inosine and xanthosine as substrates. Also catalyzes the reverse reactions. The sequence is that of Pyrimidine/purine nucleoside phosphorylase from Aromatoleum aromaticum (strain DSM 19018 / LMG 30748 / EbN1) (Azoarcus sp. (strain EbN1)).